Consider the following 549-residue polypeptide: Sorting nexin-33 (549 aa).

An SH3 domain is found at 1–61; sequence MALKARALYS…PASYVEILRP (61 aa). The span at 66–83 shows a compositional bias: polar residues; sequence VQVDYSGHTQGYTDSPHQ. Positions 66-137 are disordered; sequence VQVDYSGHTQ…RPEYTHRPRP (72 aa). Residues 86 to 101 are compositionally biased toward acidic residues; it reads YDDDEEDDDDWDDWDD. A compositionally biased stretch (polar residues) spans 110-119; the sequence is SGSNGVSRSQ. Over residues 127-137 the composition is skewed to basic and acidic residues; sequence PRPEYTHRPRP. The region spanning 205-315 is the PX domain; sequence FSCSVEEPTK…HFLSCQDEKQ (111 aa). The BAR domain occupies 346–549; the sequence is LQDVEERVDV…EKTLHMYDDL (204 aa).

The protein belongs to the sorting nexin family.

It localises to the cytoplasm. It is found in the cytosol. Its subcellular location is the membrane. The protein localises to the cytoplasmic vesicle membrane. Its function is as follows. Plays a role in the reorganization of the cytoskeleton, endocytosis and cellular vesicle trafficking, both during interphase and at the end of mitotic cell divisions. Required for efficient progress through mitosis and cytokinesis. Required for normal formation of the cleavage furrow at the end of mitosis. Modulates endocytosis of cell-surface proteins. Promotes membrane tubulation (in vitro). May promote the formation of macropinosomes. This is Sorting nexin-33 (snx33) from Xenopus tropicalis (Western clawed frog).